The sequence spans 710 residues: Bifunctional sesterterpene synthase (710 aa).

The tract at residues methionine 1–glutamate 327 is stellata-2,6,19-trien synthase. Mg(2+)-binding residues include aspartate 92 and aspartate 96. Substrate is bound by residues aspartate 92, aspartate 96, arginine 181–aspartate 184, and serine 229–glutamate 233. The short motif at aspartate 92 to aspartate 96 is the DDXXD motif 1 element. The NSE motif motif lies at tyrosine 278–lysine 286. Position 318–319 (arginine 318–tyrosine 319) interacts with substrate. Positions arginine 328–asparagine 709 are geranylgeranyl diphosphate synthase. The disordered stretch occupies residues histidine 365–glycine 404. Positions valine 368–threonine 380 are enriched in polar residues. Lysine 430, arginine 433, and histidine 462 together coordinate isopentenyl diphosphate. Residues aspartate 469 and aspartate 473 each contribute to the Mg(2+) site. Positions aspartate 469–aspartate 473 match the DDXXD motif 2 motif. Position 478 (arginine 478) interacts with dimethylallyl diphosphate. Residue arginine 479 participates in isopentenyl diphosphate binding. Lysine 556, threonine 557, glutamine 592, asparagine 599, lysine 609, and lysine 619 together coordinate dimethylallyl diphosphate.

It in the C-terminal section; belongs to the FPP/GGPP synthase family. In the N-terminal section; belongs to the terpene synthase family. Hexamer.

The enzyme catalyses 4 isopentenyl diphosphate + dimethylallyl diphosphate = (2E,6E,10E,14E)-geranylfarnesyl diphosphate + 4 diphosphate. It catalyses the reaction (2E,6E,10E,14E)-geranylfarnesyl diphosphate = variecoladiene + diphosphate. The protein operates within secondary metabolite biosynthesis; terpenoid biosynthesis. Multifunctional sesterterpene synthase; part of the gene cluster that mediates the biosynthesis of the sesterterpene variecolin. The first step in the pathway is performed by the variecoladiene synthase vrcA that possesses both prenyl transferase and terpene cyclase activity, converting isopentenyl diphosphate and dimethylallyl diphosphate into geranylfarnesyl pyrophosphate (GFPP) and then converting GFPP into the tetracyclic variecoladiene. The cytochrome P450 monooxygenase vrcB then catalyzes multiple oxidations at C-5 and C-20 positions to yield variecolin. The sequence is that of Bifunctional sesterterpene synthase from Aspergillus aculeatus (strain ATCC 16872 / CBS 172.66 / WB 5094).